A 436-amino-acid chain; its full sequence is UDP-N-acetylmuramate--L-alanine ligase (436 aa).

108-114 (GAHGKTS) is an ATP binding site.

The protein belongs to the MurCDEF family.

It localises to the cytoplasm. The catalysed reaction is UDP-N-acetyl-alpha-D-muramate + L-alanine + ATP = UDP-N-acetyl-alpha-D-muramoyl-L-alanine + ADP + phosphate + H(+). It functions in the pathway cell wall biogenesis; peptidoglycan biosynthesis. Cell wall formation. This Bacillus cereus (strain B4264) protein is UDP-N-acetylmuramate--L-alanine ligase.